A 183-amino-acid polypeptide reads, in one-letter code: Glutathione-regulated potassium-efflux system ancillary protein KefG (183 aa).

Belongs to the NAD(P)H dehydrogenase (quinone) family. KefG subfamily. As to quaternary structure, interacts with KefB.

It localises to the cell inner membrane. It carries out the reaction a quinone + NADH + H(+) = a quinol + NAD(+). The catalysed reaction is a quinone + NADPH + H(+) = a quinol + NADP(+). Functionally, regulatory subunit of a potassium efflux system that confers protection against electrophiles. Required for full activity of KefB. The protein is Glutathione-regulated potassium-efflux system ancillary protein KefG of Salmonella enteritidis PT4 (strain P125109).